The primary structure comprises 130 residues: Methylglyoxal synthase (130 aa).

The 130-residue stretch at 1–130 (MSKPRIALIA…DLARNMQDVC (130 aa)) folds into the MGS-like domain. Substrate-binding positions include His11, Lys15, 37-40 (TGTT), and 57-58 (SG). Asp63 (proton donor/acceptor) is an active-site residue. A substrate-binding site is contributed by His90.

Belongs to the methylglyoxal synthase family.

The catalysed reaction is dihydroxyacetone phosphate = methylglyoxal + phosphate. In terms of biological role, catalyzes the formation of methylglyoxal from dihydroxyacetone phosphate. The protein is Methylglyoxal synthase of Burkholderia vietnamiensis (strain G4 / LMG 22486) (Burkholderia cepacia (strain R1808)).